Consider the following 284-residue polypeptide: Bifunctional protein FolD (284 aa).

Residues 164–166 (GRG), Ser189, and Ile230 each bind NADP(+).

This sequence belongs to the tetrahydrofolate dehydrogenase/cyclohydrolase family. As to quaternary structure, homodimer.

The catalysed reaction is (6R)-5,10-methylene-5,6,7,8-tetrahydrofolate + NADP(+) = (6R)-5,10-methenyltetrahydrofolate + NADPH. The enzyme catalyses (6R)-5,10-methenyltetrahydrofolate + H2O = (6R)-10-formyltetrahydrofolate + H(+). It functions in the pathway one-carbon metabolism; tetrahydrofolate interconversion. Its function is as follows. Catalyzes the oxidation of 5,10-methylenetetrahydrofolate to 5,10-methenyltetrahydrofolate and then the hydrolysis of 5,10-methenyltetrahydrofolate to 10-formyltetrahydrofolate. This chain is Bifunctional protein FolD, found in Desulforamulus reducens (strain ATCC BAA-1160 / DSM 100696 / MI-1) (Desulfotomaculum reducens).